Reading from the N-terminus, the 163-residue chain is Lipoprotein signal peptidase (163 aa).

4 helical membrane-spanning segments follow: residues 9-29 (AWPW…SKYL), 42-62 (ILPF…SFLG), 67-87 (WQII…ILWL), and 93-113 (SEIM…GNFI). Active-site residues include Asp-123 and Asp-141. The helical transmembrane segment at 137 to 157 (FNVADSAICVGVFLLIVHMLL) threads the bilayer.

It belongs to the peptidase A8 family.

It is found in the cell inner membrane. The catalysed reaction is Release of signal peptides from bacterial membrane prolipoproteins. Hydrolyzes -Xaa-Yaa-Zaa-|-(S,diacylglyceryl)Cys-, in which Xaa is hydrophobic (preferably Leu), and Yaa (Ala or Ser) and Zaa (Gly or Ala) have small, neutral side chains.. It participates in protein modification; lipoprotein biosynthesis (signal peptide cleavage). Functionally, this protein specifically catalyzes the removal of signal peptides from prolipoproteins. The polypeptide is Lipoprotein signal peptidase (Coxiella burnetii (strain RSA 493 / Nine Mile phase I)).